Consider the following 135-residue polypeptide: Fatty acid-binding protein 5 (135 aa).

N-acetylalanine is present on alanine 2. Position 17 is an N6-acetyllysine (lysine 17). The short motif at 24–34 (KELGVGIALRK) is the Nuclear localization signal element. Residues cysteine 43 and arginine 109 each coordinate N-eicosanoyl ethanolamine. Cysteine 120 and cysteine 127 are joined by a disulfide. Residue 129 to 131 (RIY) participates in (9Z,12Z)-octadecadienoate binding. Tyrosine 131 contacts N-eicosanoyl ethanolamine. Tyrosine 131 is a hexadecanoate binding site. Tyrosine 131 is modified (phosphotyrosine).

Belongs to the calycin superfamily. Fatty-acid binding protein (FABP) family. Monomer. Homodimer. Keratinocytes; highly expressed in psoriatic skin. Expressed in brain gray matter.

The protein resides in the cytoplasm. Its subcellular location is the nucleus. It localises to the synapse. It is found in the postsynaptic density. The protein localises to the secreted. It carries out the reaction hexadecanoate(out) = hexadecanoate(in). It catalyses the reaction (9Z,12Z)-octadecadienoate(out) = (9Z,12Z)-octadecadienoate(in). The enzyme catalyses (9Z)-octadecenoate(out) = (9Z)-octadecenoate(in). Intracellular carrier for long-chain fatty acids and related active lipids, such as endocannabinoids, that regulate the metabolism and actions of the ligands they bind. In addition to the cytosolic transport, selectively delivers specific fatty acids from the cytosol to the nucleus, wherein they activate nuclear receptors. Delivers retinoic acid to the nuclear receptor peroxisome proliferator-activated receptor delta; which promotes proliferation and survival. May also serve as a synaptic carrier of endocannabinoid at central synapses and thus controls retrograde endocannabinoid signaling. Modulates inflammation by regulating PTGES induction via NF-kappa-B activation, and prostaglandin E2 (PGE2) biosynthesis during inflammation. May be involved in keratinocyte differentiation. This Homo sapiens (Human) protein is Fatty acid-binding protein 5.